The following is a 176-amino-acid chain: Ribosome maturation factor RimM (176 aa).

One can recognise a PRC barrel domain in the interval 97-176; it reads GDEFYWRELV…TIQVDWDPSF (80 aa).

Belongs to the RimM family. As to quaternary structure, binds ribosomal protein uS19.

The protein localises to the cytoplasm. Its function is as follows. An accessory protein needed during the final step in the assembly of 30S ribosomal subunit, possibly for assembly of the head region. Essential for efficient processing of 16S rRNA. May be needed both before and after RbfA during the maturation of 16S rRNA. It has affinity for free ribosomal 30S subunits but not for 70S ribosomes. The polypeptide is Ribosome maturation factor RimM (Pseudoalteromonas atlantica (strain T6c / ATCC BAA-1087)).